Here is a 489-residue protein sequence, read N- to C-terminus: Betaine aldehyde dehydrogenase (489 aa).

Positions 26 and 93 each coordinate K(+). 150-152 (GAW) serves as a coordination point for NAD(+). The active-site Charge relay system is lysine 162. NAD(+) is bound at residue 176–179 (KPSE). Valine 180 is a K(+) binding site. Residue 229–232 (GVET) participates in NAD(+) binding. Residue leucine 245 participates in K(+) binding. The active-site Proton acceptor is the glutamate 251. NAD(+) is bound by residues glycine 253, cysteine 285, and glutamate 386. Cysteine 285 (nucleophile) is an active-site residue. Residue cysteine 285 is modified to Cysteine sulfenic acid (-SOH). K(+) contacts are provided by lysine 456 and glycine 459. Glutamate 463 acts as the Charge relay system in catalysis.

This sequence belongs to the aldehyde dehydrogenase family. In terms of assembly, dimer of dimers. The cofactor is K(+).

The catalysed reaction is betaine aldehyde + NAD(+) + H2O = glycine betaine + NADH + 2 H(+). Its pathway is amine and polyamine biosynthesis; betaine biosynthesis via choline pathway; betaine from betaine aldehyde: step 1/1. Involved in the biosynthesis of the osmoprotectant glycine betaine. Catalyzes the irreversible oxidation of betaine aldehyde to the corresponding acid. The chain is Betaine aldehyde dehydrogenase from Paraburkholderia phymatum (strain DSM 17167 / CIP 108236 / LMG 21445 / STM815) (Burkholderia phymatum).